A 260-amino-acid polypeptide reads, in one-letter code: Crotonyl-CoA hydratase (260 aa).

Glu114 acts as the Nucleophile in catalysis. Glu134 serves as the catalytic Proton acceptor.

Belongs to the enoyl-CoA hydratase/isomerase family. Homotetramer.

The protein resides in the cytoplasm. It catalyses the reaction 3-hydroxybutanoyl-CoA = (2E)-butenoyl-CoA + H2O. The enzyme catalyses a short-chain (3S)-3-hydroxyacyl-CoA = a short-chain (2E)-enoyl-CoA + H2O. Its pathway is lipid metabolism; butanoate metabolism. In terms of biological role, involved in syntrophic growth of S.wolfei with butyrate, as part of the butyrate oxidation pathway. Probably catalyzes the hydration of crotonyl-CoA to 3-hydroxybutyryl-CoA. The chain is Crotonyl-CoA hydratase from Syntrophomonas wolfei subsp. wolfei (strain DSM 2245B / Goettingen).